The primary structure comprises 434 residues: Beta-enolase (434 aa).

Ala-2 is subject to N-acetylalanine. Thr-72 carries the post-translational modification Phosphothreonine. Phosphoserine is present on residues Ser-83 and Ser-157. The substrate site is built by His-158 and Glu-167. The residue at position 176 (Ser-176) is a Phosphoserine. Thr-205 carries the post-translational modification Phosphothreonine. Residue Glu-210 is the Proton donor of the active site. At Thr-229 the chain carries Phosphothreonine. A Phosphotyrosine modification is found at Tyr-236. Residue Asp-245 participates in Mg(2+) binding. Residue Ser-263 is modified to Phosphoserine. Residues Glu-293 and Asp-318 each contribute to the substrate site. Residues Glu-293 and Asp-318 each contribute to the Mg(2+) site. The active-site Proton acceptor is Lys-343. Residues 370 to 373 (SHRS) and Lys-394 each bind substrate.

Belongs to the enolase family. In terms of assembly, mammalian enolase is composed of 3 isozyme subunits, alpha, beta and gamma, which can form homodimers or heterodimers which are cell-type and development-specific. Interacts with PNKD. It depends on Mg(2+) as a cofactor.

It is found in the cytoplasm. The catalysed reaction is (2R)-2-phosphoglycerate = phosphoenolpyruvate + H2O. The protein operates within carbohydrate degradation; glycolysis; pyruvate from D-glyceraldehyde 3-phosphate: step 4/5. In terms of biological role, glycolytic enzyme that catalyzes the conversion of 2-phosphoglycerate to phosphoenolpyruvate. Appears to have a function in striated muscle development and regeneration. This Sus scrofa (Pig) protein is Beta-enolase (ENO3).